A 173-amino-acid polypeptide reads, in one-letter code: MLQFATAFLAISANVVMTQPNQEYIAPGARVSSNYRDMTIRRLRTHEIGTVPEERMPIHELEIEDLITIIASKVVPELSHSESMSLLSAEAARSRSFKDMAADELDVDGALDLLKAVQSKPETTDMTPTFGVWEESNFDSATVEKLFDSKKNDENESHIKTIVEAYKKFRKEK.

The signal sequence occupies residues methionine 1–threonine 18. The RxLR-dEER motif lies at arginine 41–arginine 55. An N-linked (GlcNAc...) asparagine glycan is attached at asparagine 155.

Belongs to the RxLR effector family.

It is found in the secreted. It localises to the host cytoplasm. The protein localises to the host nucleus. Secreted effector that suppresses pattern-triggered immunity (PTI) in plant host. The chain is Secreted RxLR effector protein RXLR-C12 from Plasmopara halstedii (Downy mildew of sunflower).